The chain runs to 2388 residues: Hybrid signal transduction histidine kinase M (2388 aa).

Disordered regions lie at residues 1 to 32, 42 to 61, 69 to 111, 123 to 209, 237 to 337, 361 to 421, 430 to 449, and 486 to 542; these read MSNYLNANSTENNNNNNNNNNNNNNNINNNFN, FNTPPIGSNNNNNNNNNSIS, NECN…STPI, NRSN…NAYP, TLLN…SPKL, SPHG…YNDN, TRNTGYSSTGSIGNSSSSSF, and IYTP…NNNE. A compositionally biased stretch (polar residues) spans 69-82; that stretch reads NECNSGGEQSPKIK. 3 stretches are compositionally biased toward low complexity: residues 83 to 110, 125 to 206, and 242 to 288; these read TNNNSYNTPVSSSTSTTGTNTTPMKSTP, SNLN…SNSN, and SSNN…NNGG. Over residues 293–306 the composition is skewed to polar residues; it reads QFISSDNKYNTVGN. Basic residues predominate over residues 309–322; sequence HHHHHHQLHNHRHS. 4 stretches are compositionally biased toward low complexity: residues 325–337, 361–399, 410–419, and 432–449; these read QGSSSPIKSSPKL, SPHGSPFSSSSSSRKSSSSPSFLNQNNQNNPNNQNNQNN, NNSNDSFDYN, and NTGYSSTGSIGNSSSSSF. Positions 489–505 are enriched in pro residues; the sequence is PPYPQPYPQPPQLPPPS. Positions 506 to 541 are enriched in low complexity; that stretch reads SSSSLSKENDNVDNNNTNNNNNNNNNNNNNNNNNNN. Helical transmembrane passes span 550 to 570, 589 to 609, 645 to 665, and 679 to 699; these read TMNLIHISLLSVLAFYIFLMV, FILIFSFHFIFSSILMFLLVV, YIFLGLVLSGLVNILQVNLFF, and NISTAIEFLVVGIVLNFSHIP. Residues 732-888 form a disordered region; that stretch reads NNDNKNKIND…NNNEEDDEEE (157 aa). A compositionally biased stretch (basic and acidic residues) spans 735 to 744; that stretch reads NKNKINDKSD. Residues 745-880 are compositionally biased toward low complexity; that stretch reads NSNSITNNNN…NNNNNNNNNN (136 aa). 3 helical membrane-spanning segments follow: residues 896–916, 953–973, and 1025–1045; these read FQIFFTRIFLCLSITYTLIVL, VQFQAPLATLLHFIQLVLLLV, and CSVGFPIVGIILDIYSGWMSI. Positions 1093–1499 constitute a Histidine kinase domain; the sequence is RLVQNTGSII…VFELQVPMKC (407 aa). Positions 1236 to 1257 are enriched in basic residues; the sequence is PIHHHRHHHRHHHHHHHHHHHH. Residues 1236-1410 form a disordered region; the sequence is PIHHHRHHHR…INNNINNNNN (175 aa). Residues 1260 to 1274 show a composition bias toward acidic residues; sequence DDDDYDDDNDDDNNT. Residues 1286–1315 are compositionally biased toward basic and acidic residues; it reads LSDKIKDNQDENLELKKSNNDKIIENKENQ. Residues 1316 to 1410 show a composition bias toward low complexity; the sequence is ENNNNNNNNN…INNNINNNNN (95 aa). A Response regulatory 1 domain is found at 1541–1656; the sequence is KILVIDDNPN…QLTVLSQLLP (116 aa). At D1592 the chain carries 4-aspartylphosphate. Disordered stretches follow at residues 1666-1702, 1960-2022, 2036-2121, 2133-2183, and 2218-2256; these read SNQNLNNSGSSNGGGGGGGGGGGGGGGGGSGSSNIDF, GNNS…NSSN, CKGD…DIIN, QQQL…VKSS, and NQLNNNINNLNLNSNNNNNNNNNNNNNNNTNNDNNNNND. The segment covering 1676–1696 has biased composition (gly residues); that stretch reads SNGGGGGGGGGGGGGGGGGSG. The segment covering 1974–1985 has biased composition (low complexity); sequence TNNNTTTTTTTT. The segment covering 1986–2010 has biased composition (polar residues); the sequence is QPKKSPILTSSNGSDKSEGSTGSNR. Residues 2054–2064 are compositionally biased toward low complexity; that stretch reads DSSSSSSSSDS. Residues 2065-2076 show a composition bias toward basic and acidic residues; the sequence is HGQDDHSYRLED. Low complexity-rich tracts occupy residues 2078–2109 and 2133–2165; these read SISSPSSQSPLLDLSGTSGTSGTTNLANSGIN and QQQLQQQQQPQQQQPPGTPTISPSSSFPLLPIP. Over residues 2169 to 2183 the composition is skewed to polar residues; it reads INSSGASSGIKVKSS. Residues 2262 to 2383 form the Response regulatory 2 domain; that stretch reads NILLVEDNLV…LLISLLKKLV (122 aa). At D2313 the chain carries 4-aspartylphosphate.

Activation probably requires transfer of a phosphate group between a histidine in the kinase core (transmitter) domain and an aspartate of the receiver domain.

The protein localises to the membrane. The enzyme catalyses ATP + protein L-histidine = ADP + protein N-phospho-L-histidine.. In terms of biological role, acts as a receptor histidine kinase for a signal transduction pathway. This protein undergoes an ATP-dependent autophosphorylation at a conserved histidine residue in the kinase core, and a phosphoryl group is then transferred to a conserved aspartate residue in the receiver domain. This is Hybrid signal transduction histidine kinase M (dhkM) from Dictyostelium discoideum (Social amoeba).